A 209-amino-acid chain; its full sequence is Ribonuclease HII (209 aa).

The RNase H type-2 domain maps to 7–198 (GPVAGVDEAG…VAKAHQEWLH (192 aa)). A divalent metal cation is bound by residues Asp13, Glu14, and Asp107.

This sequence belongs to the RNase HII family. The cofactor is Mn(2+). Mg(2+) serves as cofactor.

Its subcellular location is the cytoplasm. The catalysed reaction is Endonucleolytic cleavage to 5'-phosphomonoester.. Functionally, endonuclease that specifically degrades the RNA of RNA-DNA hybrids. This Corynebacterium glutamicum (strain ATCC 13032 / DSM 20300 / JCM 1318 / BCRC 11384 / CCUG 27702 / LMG 3730 / NBRC 12168 / NCIMB 10025 / NRRL B-2784 / 534) protein is Ribonuclease HII.